A 158-amino-acid polypeptide reads, in one-letter code: Flagellar assembly factor FliW (158 aa).

Belongs to the FliW family. As to quaternary structure, interacts with translational regulator CsrA and flagellin(s).

Its subcellular location is the cytoplasm. Functionally, acts as an anti-CsrA protein, binds CsrA and prevents it from repressing translation of its target genes, one of which is flagellin. Binds to flagellin and participates in the assembly of the flagellum. The chain is Flagellar assembly factor FliW from Moorella thermoacetica (strain ATCC 39073 / JCM 9320).